The primary structure comprises 477 residues: Glycogen synthase (477 aa).

Lys-15 is an ADP-alpha-D-glucose binding site.

The protein belongs to the glycosyltransferase 1 family. Bacterial/plant glycogen synthase subfamily.

The enzyme catalyses [(1-&gt;4)-alpha-D-glucosyl](n) + ADP-alpha-D-glucose = [(1-&gt;4)-alpha-D-glucosyl](n+1) + ADP + H(+). It participates in glycan biosynthesis; glycogen biosynthesis. Synthesizes alpha-1,4-glucan chains using ADP-glucose. This is Glycogen synthase from Glaesserella parasuis serovar 5 (strain SH0165) (Haemophilus parasuis).